The following is a 286-amino-acid chain: ATP synthase gamma chain (286 aa).

It belongs to the ATPase gamma chain family. In terms of assembly, F-type ATPases have 2 components, CF(1) - the catalytic core - and CF(0) - the membrane proton channel. CF(1) has five subunits: alpha(3), beta(3), gamma(1), delta(1), epsilon(1). CF(0) has three main subunits: a, b and c.

The protein localises to the cell inner membrane. Produces ATP from ADP in the presence of a proton gradient across the membrane. The gamma chain is believed to be important in regulating ATPase activity and the flow of protons through the CF(0) complex. The protein is ATP synthase gamma chain of Pseudomonas putida (strain GB-1).